A 128-amino-acid polypeptide reads, in one-letter code: Large ribosomal subunit protein bL20 (128 aa).

The protein belongs to the bacterial ribosomal protein bL20 family.

Functionally, binds directly to 23S ribosomal RNA and is necessary for the in vitro assembly process of the 50S ribosomal subunit. It is not involved in the protein synthesizing functions of that subunit. This Micrococcus luteus (strain ATCC 4698 / DSM 20030 / JCM 1464 / CCM 169 / CCUG 5858 / IAM 1056 / NBRC 3333 / NCIMB 9278 / NCTC 2665 / VKM Ac-2230) (Micrococcus lysodeikticus) protein is Large ribosomal subunit protein bL20.